We begin with the raw amino-acid sequence, 524 residues long: Ankyrin repeat-containing protein At5g02620 (524 aa).

ANK repeat units lie at residues 16–45 (RDDTPLHTAVREGKTDLLLEMIGEHDGVEL), 55–84 (SGETALYVAAEYGYTDMVKILMKHSDSVLA), 90–119 (NGFDAFHIAAKNGNLQVLDVLIEANPELSF), 124–153 (SKTTALHTAASQGHGEIVCFLLDKGVDLAA), 158–187 (NGKTALHSAARNGHTVIVKKLIEKKAGMVT), 192–222 (KGQTALHMAVKGQNTEIVDVLMEADGSLINS), 226–255 (KGNTPLHIAVRKNRAEIVQTVLKYCEVSRV), and 260–289 (SGETALDIAEKTGLHEIVPLLQKIGMQNAR). 4 helical membrane-spanning segments follow: residues 349-369 (AINSTTLVAILIATVAFAAIF), 399-419 (FLIFVVFDSFALFISLAVVVV), 441-461 (LMWMACIMISVAFVSLSFVVV), and 472-492 (VTAIGALIMVSTLGTMCYWVI). Serine 508 is subject to Phosphoserine.

It is found in the membrane. The sequence is that of Ankyrin repeat-containing protein At5g02620 from Arabidopsis thaliana (Mouse-ear cress).